A 214-amino-acid chain; its full sequence is Pyridoxine/pyridoxamine 5'-phosphate oxidase (214 aa).

Residues 9–12 (RRSY) and Lys-68 each bind substrate. Residues 63 to 68 (RVVLLK), 78 to 79 (YT), Lys-85, and Gln-107 each bind FMN. Residues Tyr-125, Arg-129, and Ser-133 each contribute to the substrate site. Residues 142–143 (QS) and Trp-187 each bind FMN. 193–195 (RLH) is a substrate binding site. An FMN-binding site is contributed by Arg-197.

It belongs to the pyridoxamine 5'-phosphate oxidase family. Homodimer. FMN is required as a cofactor.

It catalyses the reaction pyridoxamine 5'-phosphate + O2 + H2O = pyridoxal 5'-phosphate + H2O2 + NH4(+). The catalysed reaction is pyridoxine 5'-phosphate + O2 = pyridoxal 5'-phosphate + H2O2. The protein operates within cofactor metabolism; pyridoxal 5'-phosphate salvage; pyridoxal 5'-phosphate from pyridoxamine 5'-phosphate: step 1/1. It participates in cofactor metabolism; pyridoxal 5'-phosphate salvage; pyridoxal 5'-phosphate from pyridoxine 5'-phosphate: step 1/1. In terms of biological role, catalyzes the oxidation of either pyridoxine 5'-phosphate (PNP) or pyridoxamine 5'-phosphate (PMP) into pyridoxal 5'-phosphate (PLP). This is Pyridoxine/pyridoxamine 5'-phosphate oxidase from Christiangramia forsetii (strain DSM 17595 / CGMCC 1.15422 / KT0803) (Gramella forsetii).